A 300-amino-acid chain; its full sequence is 4-hydroxy-tetrahydrodipicolinate synthase (300 aa).

Thr46 contributes to the pyruvate binding site. The Proton donor/acceptor role is filled by Tyr134. Lys162 serves as the catalytic Schiff-base intermediate with substrate. Ile207 lines the pyruvate pocket.

The protein belongs to the DapA family. As to quaternary structure, homotetramer; dimer of dimers.

Its subcellular location is the cytoplasm. The enzyme catalyses L-aspartate 4-semialdehyde + pyruvate = (2S,4S)-4-hydroxy-2,3,4,5-tetrahydrodipicolinate + H2O + H(+). Its pathway is amino-acid biosynthesis; L-lysine biosynthesis via DAP pathway; (S)-tetrahydrodipicolinate from L-aspartate: step 3/4. Catalyzes the condensation of (S)-aspartate-beta-semialdehyde [(S)-ASA] and pyruvate to 4-hydroxy-tetrahydrodipicolinate (HTPA). This chain is 4-hydroxy-tetrahydrodipicolinate synthase, found in Protochlamydia amoebophila (strain UWE25).